The primary structure comprises 202 residues: Small ribosomal subunit protein uS4c (202 aa).

The interval 20–43 (GLTRKTTRRNSRPGQHGDQPRKPS) is disordered. The region spanning 90 to 152 (MRLDNIVFRL…ARSKQLVENY (63 aa)) is the S4 RNA-binding domain.

Belongs to the universal ribosomal protein uS4 family. Part of the 30S ribosomal subunit. Contacts protein S5. The interaction surface between S4 and S5 is involved in control of translational fidelity.

It is found in the plastid. The protein localises to the chloroplast. Functionally, one of the primary rRNA binding proteins, it binds directly to 16S rRNA where it nucleates assembly of the body of the 30S subunit. Its function is as follows. With S5 and S12 plays an important role in translational accuracy. In Rhodomonas salina (Cryptomonas salina), this protein is Small ribosomal subunit protein uS4c (rps4).